We begin with the raw amino-acid sequence, 295 residues long: Cyclin-G1 (295 aa).

It belongs to the cyclin family. Cyclin G subfamily. As to expression, high levels in skeletal muscle, ovary, kidney and colon.

Its subcellular location is the nucleus. Functionally, may play a role in growth regulation. Is associated with G2/M phase arrest in response to DNA damage. May be an intermediate by which p53 mediates its role as an inhibitor of cellular proliferation. The chain is Cyclin-G1 (CCNG1) from Homo sapiens (Human).